A 209-amino-acid chain; its full sequence is uncharacterized protein (209 aa).

This is an uncharacterized protein from Escherichia coli (strain K12).